A 227-amino-acid polypeptide reads, in one-letter code: Zeamatin (227 aa).

Positions 1–20 (MAGSVAIVGIFVALLAVAGE) are cleaved as a signal peptide. Intrachain disulfides connect Cys30-Cys226, Cys72-Cys82, Cys87-Cys93, Cys139-Cys215, Cys145-Cys198, Cys153-Cys163, Cys167-Cys176, and Cys177-Cys185.

This sequence belongs to the thaumatin family.

Functionally, has antifungal activity. Inhibits Candida albicans and Trichoderma reesei; marginal inhibition observed against Alternaria solani and Neurospora crassa. This is Zeamatin (Zlp) from Zea mays (Maize).